We begin with the raw amino-acid sequence, 486 residues long: Vacuolar-processing enzyme beta-isozyme (486 aa).

The signal sequence occupies residues 1–21 (MAKSCYFRPALLLLLVLLVHA). His-169 is a catalytic residue. Cys-211 acts as the Nucleophile in catalysis. Residues Cys-244 and Cys-258 are joined by a disulfide bond. An N-linked (GlcNAc...) asparagine glycan is attached at Asn-309. 2 disulfides stabilise this stretch: Cys-420/Cys-450 and Cys-432/Cys-467.

This sequence belongs to the peptidase C13 family. Post-translationally, auto-catalytic activation. Seed specific. Also expressed in the flowers and buds.

It is found in the vacuole. The protein resides in the protein storage vacuole. The enzyme catalyses Hydrolysis of proteins and small molecule substrates at -Asn-|-Xaa- bonds.. In terms of biological role, asparagine-specific endopeptidase involved in the processing of vacuolar seed protein precursors into the mature forms. Probably involved in post-translational proteolysis of seed storage proteins in the protein storage vacuole of developing seeds. The sequence is that of Vacuolar-processing enzyme beta-isozyme from Arabidopsis thaliana (Mouse-ear cress).